The chain runs to 162 residues: Anaerobic nitrite reductase GLB1 (162 aa).

The Globin domain occupies 9–159 (VFSEEKEALV…LVAAIKQEMK (151 aa)). The short motif at 42-46 (EIAPS) is the Homodimerization element. Heme b contacts are provided by lysine 66, histidine 70, arginine 100, threonine 104, and histidine 105. A Homodimerization motif is present at residues 112 to 124 (DGHFEVTRFALLE).

The protein belongs to the plant globin family. In terms of assembly, homodimer. The cofactor is heme b. As to expression, seeds and roots.

It localises to the cytoplasm. Its subcellular location is the nucleus. It catalyses the reaction Fe(III)-heme b-[protein] + nitric oxide + H2O = Fe(II)-heme b-[protein] + nitrite + 2 H(+). Functionally, phytoglobin that reduces nitrite to nitric oxide (NO) under anoxic conditions (e.g. during flooding or in waterlogged soil). May not function as an oxygen storage or transport protein. Has an unusually high affinity for O(2) through an hexacoordinate heme iron because of a very low dissociation constant. This Hordeum vulgare (Barley) protein is Anaerobic nitrite reductase GLB1.